The following is a 209-amino-acid chain: Holliday junction branch migration complex subunit RuvA (209 aa).

The segment at 1-64 (MIGKLKGLVD…EDSIKLYGFA (64 aa)) is domain I. Positions 65-143 (SETEREWFRL…ALGASLHTLA (79 aa)) are domain II. Positions 144 to 154 (GAGSEGAGVEA) are flexible linker. The segment at 155 to 209 (PASGAVSDAISVLVNLGFGRSQAAVAVAASSKALGSGAGAGDLAKRALQELAQSG) is domain III.

It belongs to the RuvA family. As to quaternary structure, homotetramer. Forms an RuvA(8)-RuvB(12)-Holliday junction (HJ) complex. HJ DNA is sandwiched between 2 RuvA tetramers; dsDNA enters through RuvA and exits via RuvB. An RuvB hexamer assembles on each DNA strand where it exits the tetramer. Each RuvB hexamer is contacted by two RuvA subunits (via domain III) on 2 adjacent RuvB subunits; this complex drives branch migration. In the full resolvosome a probable DNA-RuvA(4)-RuvB(12)-RuvC(2) complex forms which resolves the HJ.

The protein resides in the cytoplasm. Functionally, the RuvA-RuvB-RuvC complex processes Holliday junction (HJ) DNA during genetic recombination and DNA repair, while the RuvA-RuvB complex plays an important role in the rescue of blocked DNA replication forks via replication fork reversal (RFR). RuvA specifically binds to HJ cruciform DNA, conferring on it an open structure. The RuvB hexamer acts as an ATP-dependent pump, pulling dsDNA into and through the RuvAB complex. HJ branch migration allows RuvC to scan DNA until it finds its consensus sequence, where it cleaves and resolves the cruciform DNA. The protein is Holliday junction branch migration complex subunit RuvA of Methylocella silvestris (strain DSM 15510 / CIP 108128 / LMG 27833 / NCIMB 13906 / BL2).